Consider the following 216-residue polypeptide: 2-hydroxy-3-keto-5-methylthiopentenyl-1-phosphate phosphatase (216 aa).

The protein belongs to the HAD-like hydrolase superfamily. MtnX family.

It catalyses the reaction 2-hydroxy-5-methylsulfanyl-3-oxopent-1-enyl phosphate + H2O = 1,2-dihydroxy-5-(methylsulfanyl)pent-1-en-3-one + phosphate. It participates in amino-acid biosynthesis; L-methionine biosynthesis via salvage pathway; L-methionine from S-methyl-5-thio-alpha-D-ribose 1-phosphate: step 4/6. Its function is as follows. Dephosphorylates 2-hydroxy-3-keto-5-methylthiopentenyl-1-phosphate (HK-MTPenyl-1-P) yielding 1,2-dihydroxy-3-keto-5-methylthiopentene (DHK-MTPene). This is 2-hydroxy-3-keto-5-methylthiopentenyl-1-phosphate phosphatase from Exiguobacterium sp. (strain ATCC BAA-1283 / AT1b).